We begin with the raw amino-acid sequence, 476 residues long: Cytosolic iron-sulfur assembly component 3 (476 aa).

Ala-2 bears the N-acetylalanine mark. [4Fe-4S] cluster-binding residues include Cys-24, Cys-71, Cys-74, Cys-77, Cys-190, and Cys-246. The segment at 297–316 is disordered; that stretch reads DGLTSSVSAEEPSSHRGGGS. 2 residues coordinate [4Fe-4S] cluster: Cys-395 and Cys-399.

Belongs to the NARF family. External component of the CIA complex. In the CIA complex, interacts directly with CIAO1 and MMS19.

Its function is as follows. Component of the cytosolic iron-sulfur protein assembly (CIA) complex, a multiprotein complex that mediates the incorporation of iron-sulfur cluster into extramitochondrial Fe/S proteins. Seems to negatively regulate the level of HIF1A expression, although this effect could be indirect. The sequence is that of Cytosolic iron-sulfur assembly component 3 (Ciao3) from Mus musculus (Mouse).